Here is a 276-residue protein sequence, read N- to C-terminus: Kallikrein-10 (276 aa).

The signal sequence occupies residues 1-30; that stretch reads MRAPHLHLSAASGARALAKLLPLLMAQLWA. Residue Asn39 is glycosylated (N-linked (GlcNAc...) asparagine). The Peptidase S1 domain maps to 47–274; the sequence is AYGSPCARGS…YMSWINKVIR (228 aa). Intrachain disulfides connect Cys52/Cys162, Cys71/Cys87, Cys169/Cys235, Cys201/Cys215, and Cys225/Cys250. Residues His86 and Asp137 each act as charge relay system in the active site. Catalysis depends on Ser229, which acts as the Charge relay system.

It belongs to the peptidase S1 family. Kallikrein subfamily. As to expression, expressed in breast, ovary and prostate.

Its subcellular location is the secreted. Functionally, has a tumor-suppressor role for NES1 in breast and prostate cancer. This Homo sapiens (Human) protein is Kallikrein-10 (KLK10).